A 223-amino-acid polypeptide reads, in one-letter code: Class E basic helix-loop-helix protein 23 (223 aa).

Residues 32-93 (PETTRGFGAS…GVAVDARRRP (62 aa)) are disordered. The bHLH domain maps to 98–152 (SLRLSINARERRRMHDLNDALDGLRAVIPYAHSPSVRKLSKIATLLLAKNYILMQ).

Expressed in brain and retina.

It localises to the nucleus. Its function is as follows. May function as transcriptional repressor. May modulate the expression of genes required for the differentiation and/or maintenance of pancreatic and neuronal cell types. May be important for rod bipolar cell maturation. This chain is Class E basic helix-loop-helix protein 23 (Bhlhe23), found in Mus musculus (Mouse).